The chain runs to 145 residues: Peptide methionine sulfoxide reductase MsrB (145 aa).

Residues 4 to 127 form the MsrB domain; the sequence is SDELKQRIGD…NSAALKFIPY (124 aa). Cys-116 serves as the catalytic Nucleophile.

Belongs to the MsrB Met sulfoxide reductase family.

The enzyme catalyses L-methionyl-[protein] + [thioredoxin]-disulfide + H2O = L-methionyl-(R)-S-oxide-[protein] + [thioredoxin]-dithiol. This Streptococcus pyogenes serotype M1 protein is Peptide methionine sulfoxide reductase MsrB.